A 316-amino-acid polypeptide reads, in one-letter code: Olfactory receptor 51J1 (316 aa).

At 1-31 the chain is on the extracellular side; it reads MKISNNSLGFLPTTFILVGIPGLESEHLWIS. The N-linked (GlcNAc...) asparagine glycan is linked to N5. The chain crosses the membrane as a helical span at residues 32–52; sequence VPFSLIYIIIFLGNGIILHVI. Residues 53-63 lie on the Cytoplasmic side of the membrane; sequence RTDIALHQPMY. The helical transmembrane segment at 64–84 threads the bilayer; it reads LFLAMLALAEVRVSASTLPTV. At 85–104 the chain is on the extracellular side; it reads LGIFLFGNTEISLEACLFPD. A disulfide bridge links C100 with C191. A helical membrane pass occupies residues 105-125; the sequence is VLHPFFIHDGASCAAGHVFGP. The Cytoplasmic segment spans residues 126 to 161; that stretch reads LYSHLQPTELHSYPDTAQGLWHRSYYRTEKHYAHGS. Residues 162–182 form a helical membrane-spanning segment; that stretch reads VAHSLMASALLWPQCPLTFLL. The Extracellular segment spans residues 183-191; sequence SAPQSYLSC. The helical transmembrane segment at 192–212 threads the bilayer; sequence GNISVNNIYGIFIVTSTFGLD. The Cytoplasmic portion of the chain corresponds to 213–242; sequence SLLIVISYGLILHTVLGIATGEGRKKALNT. A helical transmembrane segment spans residues 243–263; the sequence is CGSHVCAVLAYYVPMIGLSIV. Residues 264–275 are Extracellular-facing; it reads HRLGHRVSPLLQ. A helical transmembrane segment spans residues 276–296; that stretch reads AMMANAYLFFPPVVNPIVYSI. Residues 297–316 are Cytoplasmic-facing; it reads KTKEIHGAIVRMLLEKRRRV.

This sequence belongs to the G-protein coupled receptor 1 family.

Its subcellular location is the cell membrane. Functionally, odorant receptor. The chain is Olfactory receptor 51J1 (OR51J1) from Homo sapiens (Human).